Consider the following 346-residue polypeptide: Dimethyladenosine transferase 1, mitochondrial (346 aa).

A mitochondrion-targeting transit peptide spans 1 to 27 (MAASGKLSTCRLPPLPTIREIIKLLRL). Residues Leu38, Gly63, Glu85, Lys86, Asp111, Val112, and Asn141 each coordinate S-adenosyl-L-methionine.

Belongs to the class I-like SAM-binding methyltransferase superfamily. rRNA adenine N(6)-methyltransferase family. KsgA subfamily. In terms of assembly, interacts with mitochondrial RNA polymerase POLRMT. Interacts with TFAM. Bound to the maturing mtSSU until the late stages of assembly. As to expression, ubiquitously expressed.

It is found in the mitochondrion. The catalysed reaction is adenosine(N)/adenosine(N+1) in rRNA + 4 S-adenosyl-L-methionine = N(6)-dimethyladenosine(N)/N(6)-dimethyladenosine(N+1) in rRNA + 4 S-adenosyl-L-homocysteine + 4 H(+). Its function is as follows. Mitochondrial methyltransferase which uses S-adenosyl methionine to dimethylate two highly conserved adjacent adenosine residues (A1583 and A1584) within the loop of helix 45 at the 3-prime end of 12S rRNA, thereby regulating the assembly or stability of the small subunit of the mitochondrial ribosome. Also required for basal transcription of mitochondrial DNA, probably via its interaction with POLRMT and TFAM. Stimulates transcription independently of the methyltransferase activity. The protein is Dimethyladenosine transferase 1, mitochondrial of Homo sapiens (Human).